A 352-amino-acid polypeptide reads, in one-letter code: tRNA(Ile)-lysidine synthase (352 aa).

58–63 contacts ATP; it reads SGGADS.

The protein belongs to the tRNA(Ile)-lysidine synthase family.

It localises to the cytoplasm. The enzyme catalyses cytidine(34) in tRNA(Ile2) + L-lysine + ATP = lysidine(34) in tRNA(Ile2) + AMP + diphosphate + H(+). Ligates lysine onto the cytidine present at position 34 of the AUA codon-specific tRNA(Ile) that contains the anticodon CAU, in an ATP-dependent manner. Cytidine is converted to lysidine, thus changing the amino acid specificity of the tRNA from methionine to isoleucine. The chain is tRNA(Ile)-lysidine synthase from Streptomyces coelicolor (strain ATCC BAA-471 / A3(2) / M145).